Consider the following 543-residue polypeptide: Protein SGE1 (543 aa).

Residues 1–8 (MKSTLSLT) are Cytoplasmic-facing. A helical transmembrane segment spans residues 9–29 (LCVISLLLTLFLAALDIVIVV). The Extracellular portion of the chain corresponds to 30–41 (TLYDTIGIKFHD). Residues 42-62 (FGNIGWLVTGYALSNAVFMLL) traverse the membrane as a helical segment. The Cytoplasmic segment spans residues 63-79 (WGRLAEILGTKECLMIS). The chain crosses the membrane as a helical span at residues 80 to 100 (VIVFEIGSLISALSNSMATLI). Residues 101 to 103 (SGR) are Extracellular-facing. Residues 104–124 (VVAGFGGSGIESLAFVVGTSI) form a helical membrane-spanning segment. Residues 125–131 (VRENHRG) are Cytoplasmic-facing. A helical membrane pass occupies residues 132–152 (IMITALAISYVIAEGVGPFIG). Residues 153–162 (GAFNEHLSWR) lie on the Extracellular side of the membrane. A helical membrane pass occupies residues 163-183 (WCFYINLPIGAFAFIILAFCN). The Cytoplasmic segment spans residues 184–227 (TSGEPHQKMWLPSKIKKIMNYDYGELLKASFWKNTFEVLVFKLD). The chain crosses the membrane as a helical span at residues 228–248 (MVGIILSSAGFTLLMLGLSFG). The Extracellular portion of the chain corresponds to 249–255 (GNNFPWN). Residues 256–276 (SGIIICFFTVGPILLLLFCAY) form a helical membrane-spanning segment. Over 277 to 300 (DFHFLSLSGLHYDNKRIKPLLTWN) the chain is Cytoplasmic. The chain crosses the membrane as a helical span at residues 301–321 (IASNCGIFTSSITGFLSCFAY). The Extracellular segment spans residues 322-341 (ELQSAYLVQLYQLVFKKKPT). A helical transmembrane segment spans residues 342–362 (LASIHLWELSIPAMIATMAIA). The Cytoplasmic portion of the chain corresponds to 363-373 (YLNSKYGIIKP). The helical transmembrane segment at 374–394 (AIVFGVLCGIVGSGLFTLING) threads the bilayer. The Extracellular portion of the chain corresponds to 395-399 (ELSQS). Residues 400–420 (IGYSILPGIAFGSIFQATLLS) traverse the membrane as a helical segment. The Cytoplasmic portion of the chain corresponds to 421 to 443 (SQVQITSDDPDFQNKFIEVTAFN). The chain crosses the membrane as a helical span at residues 444–464 (SFAKSLGFAFGGNMGAMIFTA). Residues 465–508 (SLKNQMRSSQLNIPQFTSVETLLAYSTEHYDGPQSSLSKFINTA) are Extracellular-facing. A helical membrane pass occupies residues 509-529 (IHDVFYCALGCYALSFFFGIF). Residues 530–543 (TSSKKTTISAKKQQ) lie on the Cytoplasmic side of the membrane.

Belongs to the major facilitator superfamily.

It localises to the membrane. Its function is as follows. Drug export permease. Multi-copy suppressor of loss-of-function mutation of GAL11. Involved specifically in transcription of GAL4-dependent genes. Can link GAL4 with the basal transcription machinery if GAL11 is missing. Confers resistance to 10-N-nonyl acridine orange (NAO) and in general to cationic dyes. This is Protein SGE1 (SGE1) from Saccharomyces cerevisiae (strain ATCC 204508 / S288c) (Baker's yeast).